The primary structure comprises 126 residues: Glycine cleavage system H protein (126 aa).

Residues 22 to 104 (VVFIGITDYA…YGAGWIIKVK (83 aa)) form the Lipoyl-binding domain. At K63 the chain carries N6-lipoyllysine.

This sequence belongs to the GcvH family. The glycine cleavage system is composed of four proteins: P, T, L and H. (R)-lipoate serves as cofactor.

The glycine cleavage system catalyzes the degradation of glycine. The H protein shuttles the methylamine group of glycine from the P protein to the T protein. In Porphyromonas gingivalis (strain ATCC 33277 / DSM 20709 / CIP 103683 / JCM 12257 / NCTC 11834 / 2561), this protein is Glycine cleavage system H protein.